The following is a 294-amino-acid chain: 4-hydroxy-tetrahydrodipicolinate synthase (294 aa).

T45 provides a ligand contact to pyruvate. The active-site Proton donor/acceptor is Y133. K161 acts as the Schiff-base intermediate with substrate in catalysis. A pyruvate-binding site is contributed by I203.

Belongs to the DapA family. In terms of assembly, homotetramer; dimer of dimers.

The protein localises to the cytoplasm. The enzyme catalyses L-aspartate 4-semialdehyde + pyruvate = (2S,4S)-4-hydroxy-2,3,4,5-tetrahydrodipicolinate + H2O + H(+). It participates in amino-acid biosynthesis; L-lysine biosynthesis via DAP pathway; (S)-tetrahydrodipicolinate from L-aspartate: step 3/4. Functionally, catalyzes the condensation of (S)-aspartate-beta-semialdehyde [(S)-ASA] and pyruvate to 4-hydroxy-tetrahydrodipicolinate (HTPA). The protein is 4-hydroxy-tetrahydrodipicolinate synthase of Buchnera aphidicola subsp. Baizongia pistaciae (strain Bp).